Reading from the N-terminus, the 75-residue chain is Small ribosomal subunit protein eS17 (75 aa).

Belongs to the eukaryotic ribosomal protein eS17 family.

This Thermoplasma acidophilum (strain ATCC 25905 / DSM 1728 / JCM 9062 / NBRC 15155 / AMRC-C165) protein is Small ribosomal subunit protein eS17.